Here is a 176-residue protein sequence, read N- to C-terminus: Thiol-disulfide oxidoreductase ResA (176 aa).

A helical; Signal-anchor for type II membrane protein transmembrane segment spans residues 11–30 (LSILAVISVALGYTFYSNFF). The Thioredoxin domain maps to 36 to 176 (ARAGEQAVNF…EFMELIKPEA (141 aa)). An intrachain disulfide couples Cys74 to Cys77.

This sequence belongs to the thioredoxin family. ResA subfamily.

The protein localises to the cell membrane. The protein operates within protein modification; cytochrome c assembly. Its function is as follows. Thiol-disulfide oxidoreductase which is required in disulfide reduction during c-type cytochrome synthesis. May accept reducing equivalents from CcdA, leading to breakage of disulfide bonds in apocytochrome c; following this reduction heme can be covalently attached. This is Thiol-disulfide oxidoreductase ResA from Halalkalibacterium halodurans (strain ATCC BAA-125 / DSM 18197 / FERM 7344 / JCM 9153 / C-125) (Bacillus halodurans).